Consider the following 275-residue polypeptide: Autophagy-related protein 5 (275 aa).

Lysine 129 is covalently cross-linked (Glycyl lysine isopeptide (Lys-Gly) (interchain with G-Cter in lgg-3/ATG12)). The segment covering 221–231 (LSSSSSSSTDS) has biased composition (low complexity). Positions 221-241 (LSSSSSSSTDSQSEHPPRLIS) are disordered.

Belongs to the ATG5 family. In terms of assembly, most likely a component of a complex at least containing atg-5, lgg-3/ATG12, atg-16.1 and/or atg-16.2. Interacts with lgg-3/ATG12. Interacts with atg-16.1 (via N-terminus) and atg-16.2 (via N-terminus). Post-translationally, conjugated to lgg-3/ATG12; which is essential for autophagy.

It localises to the preautophagosomal structure membrane. Involved in autophagic vesicle formation. Conjugation with lgg-3/ATG12, through a ubiquitin-like conjugating system involving atg-7 as an E1-like activating enzyme and atg-10 as an E2-like conjugating enzyme, is essential for its function. Most likely a component of an atg-5-lgg-3-atg-16 complex that promotes autophagosome formation by associating with lgg-2, but not lgg-1, at the preautophagosomal membrane. Probably, as part of an atg-5-lgg-3-atg-16 complex, required for lgg-1 lipidation; the complex acts as an E3-like enzyme promoting atg-3-mediated lgg-1 lipidation. Furthermore, association with atg-16.2 is required for the nucleation of lgg-1 positive autophagic vesicles. This is Autophagy-related protein 5 from Caenorhabditis elegans.